A 376-amino-acid polypeptide reads, in one-letter code: Erythronate-4-phosphate dehydrogenase (376 aa).

Substrate is bound by residues serine 45 and threonine 67. Residue aspartate 147 coordinates NAD(+). Arginine 209 is a catalytic residue. NAD(+) is bound at residue aspartate 233. Glutamate 238 is a catalytic residue. The Proton donor role is filled by histidine 255. Glycine 258 lines the NAD(+) pocket. Tyrosine 259 provides a ligand contact to substrate.

Belongs to the D-isomer specific 2-hydroxyacid dehydrogenase family. PdxB subfamily. In terms of assembly, homodimer.

The protein localises to the cytoplasm. It carries out the reaction 4-phospho-D-erythronate + NAD(+) = (R)-3-hydroxy-2-oxo-4-phosphooxybutanoate + NADH + H(+). Its pathway is cofactor biosynthesis; pyridoxine 5'-phosphate biosynthesis; pyridoxine 5'-phosphate from D-erythrose 4-phosphate: step 2/5. Functionally, catalyzes the oxidation of erythronate-4-phosphate to 3-hydroxy-2-oxo-4-phosphonooxybutanoate. In Shewanella sp. (strain W3-18-1), this protein is Erythronate-4-phosphate dehydrogenase.